The primary structure comprises 206 residues: Guanylate kinase (206 aa).

A Guanylate kinase-like domain is found at 5 to 183; the sequence is FNLLILSGPS…SKEIILSIAK (179 aa). 12–19 is a binding site for ATP; that stretch reads GPSGAGKS.

This sequence belongs to the guanylate kinase family.

The protein resides in the cytoplasm. The enzyme catalyses GMP + ATP = GDP + ADP. Functionally, essential for recycling GMP and indirectly, cGMP. The polypeptide is Guanylate kinase (gmk) (Helicobacter pylori (strain J99 / ATCC 700824) (Campylobacter pylori J99)).